A 238-amino-acid polypeptide reads, in one-letter code: tRNA (guanine-N(1)-)-methyltransferase (238 aa).

S-adenosyl-L-methionine is bound by residues G110 and 129–134 (LGDFIL).

Belongs to the RNA methyltransferase TrmD family. Homodimer.

Its subcellular location is the cytoplasm. It carries out the reaction guanosine(37) in tRNA + S-adenosyl-L-methionine = N(1)-methylguanosine(37) in tRNA + S-adenosyl-L-homocysteine + H(+). Specifically methylates guanosine-37 in various tRNAs. The protein is tRNA (guanine-N(1)-)-methyltransferase of Clostridium botulinum (strain Alaska E43 / Type E3).